A 175-amino-acid polypeptide reads, in one-letter code: Small ribosomal subunit protein bS16 (175 aa).

It belongs to the bacterial ribosomal protein bS16 family.

This Cytophaga hutchinsonii (strain ATCC 33406 / DSM 1761 / CIP 103989 / NBRC 15051 / NCIMB 9469 / D465) protein is Small ribosomal subunit protein bS16.